The primary structure comprises 465 residues: Serine carboxypeptidase-like 46 (465 aa).

Residues 1 to 25 (MPRLQCLTMATSLILLLQALSLVSS) form the signal peptide. Intrachain disulfides connect Cys-88/Cys-344, Cys-245/Cys-263, and Cys-288/Cys-313. Asn-137 and Asn-170 each carry an N-linked (GlcNAc...) asparagine glycan. Ser-179 is an active-site residue. N-linked (GlcNAc...) asparagine glycosylation is present at Asn-246. Residues Asp-381 and His-438 contribute to the active site.

This sequence belongs to the peptidase S10 family. In terms of tissue distribution, ubiquitous.

It localises to the secreted. In terms of biological role, probable carboxypeptidase. This Arabidopsis thaliana (Mouse-ear cress) protein is Serine carboxypeptidase-like 46 (SCPL46).